A 357-amino-acid chain; its full sequence is Dual-specificity RNA methyltransferase RlmN (357 aa).

The active-site Proton acceptor is E89. The Radical SAM core domain occupies 109–340 (EGEKYTVCVS…CTIRESKALD (232 aa)). C116 and C345 are joined by a disulfide. 3 residues coordinate [4Fe-4S] cluster: C123, C127, and C130. Residues 173–174 (GE), S203, 226–228 (SLH), and N302 contribute to the S-adenosyl-L-methionine site. C345 acts as the S-methylcysteine intermediate in catalysis.

It belongs to the radical SAM superfamily. RlmN family. It depends on [4Fe-4S] cluster as a cofactor.

The protein resides in the cytoplasm. It catalyses the reaction adenosine(2503) in 23S rRNA + 2 reduced [2Fe-2S]-[ferredoxin] + 2 S-adenosyl-L-methionine = 2-methyladenosine(2503) in 23S rRNA + 5'-deoxyadenosine + L-methionine + 2 oxidized [2Fe-2S]-[ferredoxin] + S-adenosyl-L-homocysteine. The enzyme catalyses adenosine(37) in tRNA + 2 reduced [2Fe-2S]-[ferredoxin] + 2 S-adenosyl-L-methionine = 2-methyladenosine(37) in tRNA + 5'-deoxyadenosine + L-methionine + 2 oxidized [2Fe-2S]-[ferredoxin] + S-adenosyl-L-homocysteine. Functionally, specifically methylates position 2 of adenine 2503 in 23S rRNA and position 2 of adenine 37 in tRNAs. m2A2503 modification seems to play a crucial role in the proofreading step occurring at the peptidyl transferase center and thus would serve to optimize ribosomal fidelity. This Helicobacter pylori (strain HPAG1) protein is Dual-specificity RNA methyltransferase RlmN.